The primary structure comprises 467 residues: tRNA-2-methylthio-N(6)-dimethylallyladenosine synthase (467 aa).

The disordered stretch occupies residues 1–20 (MSDDTTQIEPAMAQETSPRA). An MTTase N-terminal domain is found at 23–143 (RKVFVKTYGC…LPNALARVRG (121 aa)). Cysteine 32, cysteine 68, cysteine 106, cysteine 184, cysteine 188, and cysteine 191 together coordinate [4Fe-4S] cluster. Positions 170 to 402 (RKRGVSAFLT…QALLSAQQYA (233 aa)) constitute a Radical SAM core domain. In terms of domain architecture, TRAM spans 405–467 (DSMIGRKMDV…TNSLIAQKLA (63 aa)).

Belongs to the methylthiotransferase family. MiaB subfamily. Monomer. [4Fe-4S] cluster is required as a cofactor.

Its subcellular location is the cytoplasm. It catalyses the reaction N(6)-dimethylallyladenosine(37) in tRNA + (sulfur carrier)-SH + AH2 + 2 S-adenosyl-L-methionine = 2-methylsulfanyl-N(6)-dimethylallyladenosine(37) in tRNA + (sulfur carrier)-H + 5'-deoxyadenosine + L-methionine + A + S-adenosyl-L-homocysteine + 2 H(+). Catalyzes the methylthiolation of N6-(dimethylallyl)adenosine (i(6)A), leading to the formation of 2-methylthio-N6-(dimethylallyl)adenosine (ms(2)i(6)A) at position 37 in tRNAs that read codons beginning with uridine. In Brucella suis (strain ATCC 23445 / NCTC 10510), this protein is tRNA-2-methylthio-N(6)-dimethylallyladenosine synthase.